Reading from the N-terminus, the 217-residue chain is Nucleolar protein 12 (217 aa).

The stretch at 34-98 (GFHKRKVERK…LVTAKTESVQ (65 aa)) forms a coiled coil. The disordered stretch occupies residues 122–217 (LGLPLPEQGD…MTGKARHNGE (96 aa)). Acidic residues predominate over residues 130–141 (GDQDGSQEEEMS). 2 stretches are compositionally biased toward basic residues: residues 172-184 (AHSR…KHPR) and 201-217 (KTQR…HNGE).

It belongs to the RRP17 family. As to quaternary structure, interacts with KIAA1191. As to expression, expressed in brain, lung, spleen, kidney and heart.

Its subcellular location is the nucleus. The protein resides in the nucleolus. It localises to the cytoplasm. Multifunctional RNA binding protein that plays a role in RNA metabolism and DNA maintenance. Participates in the resolution of DNA stress and the maintenance of genome integrity by localizing to sites of DNA insults. Also plays a role in proper nucleolar organization by limiting nucleolar size and regulating nucleolar number. Mechanistically, regulates the nucleolar levels of fibrillarin and nucleolin, two key players in pre-rRNA processing and ribosome assembly. This is Nucleolar protein 12 (Nol12) from Mus musculus (Mouse).